We begin with the raw amino-acid sequence, 402 residues long: Bacillibactin exporter (402 aa).

The next 11 membrane-spanning stretches (helical) occupy residues 4–24 (IIAL…LIPV), 39–59 (VSLI…IAGY), 69–89 (ILLP…FAST), 104–124 (LQGI…GDLF), 162–182 (FVPF…VLFL), 212–232 (WLYT…GVLF), 247–267 (VAKG…SFIA), 278–298 (MKFC…ALWW), 302–322 (FYFL…ALPA), 342–362 (FYNS…AALM), and 368–388 (IIFI…LFTV).

It belongs to the major facilitator superfamily.

It localises to the cell membrane. Its function is as follows. Involved in secretion of bacillibactin. The polypeptide is Bacillibactin exporter (ymfD) (Bacillus subtilis (strain 168)).